The chain runs to 177 residues: Putative HVA22-like protein g (177 aa).

Residues 145-165 are disordered; that stretch reads QSTPKSKAEEKKETTIPKLDD. Residues 150-165 show a composition bias toward basic and acidic residues; that stretch reads SKAEEKKETTIPKLDD.

It belongs to the DP1 family.

This Arabidopsis thaliana (Mouse-ear cress) protein is Putative HVA22-like protein g (HVA22G).